We begin with the raw amino-acid sequence, 148 residues long: Glutamate mutase sigma subunit (148 aa).

In terms of domain architecture, B12-binding spans 3–140; it reads NPTIVIGVIG…KRDIERVMQS (138 aa). Adenosylcob(III)alamin-binding positions include 13-17, His16, 61-63, and 93-97; these read ADCHA, SSI, and NLVIG.

This sequence belongs to the methylaspartate mutase GlmS subunit family. Heterotetramer composed of 2 epsilon subunits (GlmE) and 2 sigma subunits (GlmS). GlmE exists as a homodimer and GlmS as a monomer. Requires adenosylcob(III)alamin as cofactor.

It carries out the reaction (2S,3S)-3-methyl-L-aspartate = L-glutamate. It participates in amino-acid degradation; L-glutamate degradation via mesaconate pathway; acetate and pyruvate from L-glutamate: step 1/4. In terms of biological role, catalyzes the carbon skeleton rearrangement of L-glutamate to L-threo-3-methylaspartate ((2S,3S)-3-methylaspartate). In Yersinia enterocolitica serotype O:8 / biotype 1B (strain NCTC 13174 / 8081), this protein is Glutamate mutase sigma subunit.